The following is a 285-amino-acid chain: Diphthine methyl ester synthase (285 aa).

Residues leucine 9, aspartate 84, glycine 87, 112 to 113 (SI), and leucine 163 each bind S-adenosyl-L-methionine. Serine 171 carries the phosphoserine modification. The S-adenosyl-L-methionine site is built by valine 225 and histidine 250.

Belongs to the diphthine synthase family.

The enzyme catalyses 2-[(3S)-amino-3-carboxypropyl]-L-histidyl-[translation elongation factor 2] + 4 S-adenosyl-L-methionine = diphthine methyl ester-[translation elongation factor 2] + 4 S-adenosyl-L-homocysteine + 3 H(+). It functions in the pathway protein modification; peptidyl-diphthamide biosynthesis. S-adenosyl-L-methionine-dependent methyltransferase that catalyzes four methylations of the modified target histidine residue in translation elongation factor 2 (EF-2), to form an intermediate called diphthine methyl ester. The four successive methylation reactions represent the second step of diphthamide biosynthesis. This chain is Diphthine methyl ester synthase (DPH5), found in Bos taurus (Bovine).